The sequence spans 202 residues: Na(+)-translocating NADH-quinone reductase subunit E (202 aa).

6 helical membrane-spanning segments follow: residues 11–31, 35–55, 81–101, 114–134, 144–164, and 180–200; these read AIFVENMALAFFLGMCTFLAI, IEAATGLGIAVVVVLTVTVPV, FLGLLTYIGVIAAIVQIMEMV, GVFLPLITVNCAILGASLFMV, LVYGFGAGVGWALAIIALAGI, and LGITFITVGLMSLGFMSFSGI.

Belongs to the NqrDE/RnfAE family. As to quaternary structure, composed of six subunits; NqrA, NqrB, NqrC, NqrD, NqrE and NqrF.

Its subcellular location is the cell inner membrane. It carries out the reaction a ubiquinone + n Na(+)(in) + NADH + H(+) = a ubiquinol + n Na(+)(out) + NAD(+). Its function is as follows. NQR complex catalyzes the reduction of ubiquinone-1 to ubiquinol by two successive reactions, coupled with the transport of Na(+) ions from the cytoplasm to the periplasm. NqrA to NqrE are probably involved in the second step, the conversion of ubisemiquinone to ubiquinol. This chain is Na(+)-translocating NADH-quinone reductase subunit E, found in Marinobacter nauticus (strain ATCC 700491 / DSM 11845 / VT8) (Marinobacter aquaeolei).